The following is a 201-amino-acid chain: Putative manganese efflux pump MntP 2 (201 aa).

6 consecutive transmembrane segments (helical) span residues 3–23 (LISV…VSIT), 39–59 (IGLF…SIGI), 65–85 (IAAL…GKMI), 116–136 (LILL…SFAF), 141–161 (IINT…IGVM), and 176–196 (ILGG…HTNI).

Belongs to the MntP (TC 9.B.29) family.

It is found in the cell membrane. Its function is as follows. Probably functions as a manganese efflux pump. The sequence is that of Putative manganese efflux pump MntP 2 from Clostridium botulinum (strain Langeland / NCTC 10281 / Type F).